The primary structure comprises 200 residues: MKVYFLKENLNSYQIFPIPQNLNDFVEMEVENESELETKQLINFKSQYILVDRQPTELHIWNGNSWVIDEEKQTEVKRELIKRLVDSIDDTAASISAKWTRFSEEYKERESAALAFKEANFTGEVSIYISSLATVAGLDNKSATLLILKQAEGLRTLQEQLAAQRMRKYELKHEELSEEELQQIHNDIIRKMKALAEVQQ.

This is an uncharacterized protein from Haemophilus phage HP1 (strain HP1c1) (Bacteriophage HP1).